A 2339-amino-acid chain; its full sequence is Voltage-dependent N-type calcium channel subunit alpha-1B (2339 aa).

Residues 1 to 37 (MVRFGDELGGRYGGPGGGERARGGGAGGAGGPGPGGL) form a disordered region. Residues 1 to 90 (MVRFGDELGG…DNVVRKYAKR (90 aa)) are Cytoplasmic-facing. Residues 10-37 (GRYGGPGGGERARGGGAGGAGGPGPGGL) are compositionally biased toward gly residues. Position 22 is an omega-N-methylarginine (arginine 22). An I repeat occupies 82-359 (NVVRKYAKRI…LVLGVLSGEF (278 aa)). A helical transmembrane segment spans residues 91 to 114 (ITEWPPFEYMILATIIANCIVLAL). The Extracellular segment spans residues 115 to 131 (EQHLPDGDKTPMSERLD). The chain crosses the membrane as a helical span at residues 132–152 (DTEPYFIGIFCFEAGIKIIAL). At 153-163 (GFVFHKGSYLR) the chain is on the cytoplasmic side. Residues 164–182 (NGWNVMDFVVVLTGILATA) form a helical membrane-spanning segment. The Extracellular segment spans residues 183 to 187 (GTDFD). The helical transmembrane segment at 188 to 211 (LRTLRAVRVLRPLKLVSGIPSLQV) threads the bilayer. Over 212 to 221 (VLKSIMKAMV) the chain is Cytoplasmic. A helical transmembrane segment spans residues 222 to 244 (PLLQIGLLLFFAILMFAIIGLEF). At 245–331 (YMGKFHKACF…NTNDAAGNTW (87 aa)) the chain is on the extracellular side. N-linked (GlcNAc...) asparagine glycosylation is present at asparagine 256. Residues 332–356 (NWLYFIPLIIIGSFFMLNLVLGVLS) traverse the membrane as a helical segment. The Cytoplasmic portion of the chain corresponds to 357 to 482 (GEFAKERERV…FFIRRMVKAQ (126 aa)). The interval 379–396 (QQIERELNGYLEWIFKAE) is binding to the beta subunit. Serine 411 carries the phosphoserine modification. 451–458 (ASLKSGKT) is an ATP binding site. The II repeat unit spans residues 468-712 (EKMFRFFIRR…VFLAIAVDNL (245 aa)). Residues 483-501 (SFYWVVLCVVALNTLCVAM) form a helical membrane-spanning segment. Residues 502 to 511 (VHYNQPRRLT) lie on the Extracellular side of the membrane. Residues 512-534 (TTLYFAEFVFLGLFLTEMSLKMY) form a helical membrane-spanning segment. At 535 to 544 (GLGPRSYFRS) the chain is on the cytoplasmic side. Serine 544 contributes to the a 1,2-diacyl-sn-glycero-3-phospho-(1D-myo-inositol-4,5-bisphosphate) binding site. A helical membrane pass occupies residues 545–566 (SFNCFDFGVIVGSVFEVVWAAI). The Extracellular segment spans residues 567-573 (KPGSSFG). Residues 574-586 (ISVLRALRLLRIF) traverse the membrane as a helical segment. Residues arginine 584 and lysine 587 each coordinate a 1,2-diacyl-sn-glycero-3-phospho-(1D-myo-inositol-4,5-bisphosphate). Residues 587 to 604 (KVTKYWSSLRNLVVSLLN) are Cytoplasmic-facing. The chain crosses the membrane as a helical span at residues 605-630 (SMKSIISLLFLLFLFIVVFALLGMQL). Residues 631–682 (FGGQFNFQDETPTTNFDTFPAAILTVFQILTGEDWNAVMYHGIESQGGVSKG) lie on the Extracellular side of the membrane. The helical transmembrane segment at 683–709 (MFSSFYFIVLTLFGNYTLLNVFLAIAV) threads the bilayer. At 710 to 1151 (DNLANAQELT…FCHYIVTMRY (442 aa)) the chain is on the cytoplasmic side. Residues serine 745, serine 748, and serine 783 each carry the phosphoserine modification. 4 stretches are compositionally biased toward basic and acidic residues: residues 816–826 (PLVVELGRDGA), 857–886 (KDKT…EERP), 922–932 (GSPEEAAEREP), and 965–976 (GPREAESGEEPA). Disordered regions lie at residues 816–1038 (PLVV…VTVG) and 1054–1076 (QPED…DPNT). Positions 977 to 986 (RRHRARHKAQ) are enriched in basic residues. Positions 990-1029 (EAVEKETTEKEATEKEAEIVEADKEKELRNHQPREPHCDL) are enriched in basic and acidic residues. A Phosphoserine modification is found at serine 1069. The stretch at 1137 to 1419 (NLLRRFCHYI…IFVALIIITF (283 aa)) is one III repeat. Residues 1152–1170 (FEVVILVVIALSSIALAAE) form a helical membrane-spanning segment. Residues 1171–1178 (DPVRTDSP) lie on the Extracellular side of the membrane. A helical transmembrane segment spans residues 1179–1203 (RNNALKYLDYIFTGVFTFEMVIKMI). The Cytoplasmic portion of the chain corresponds to 1204–1217 (DLGLLLHPGAYFRD). The helical transmembrane segment at 1218–1238 (LWNILDFIVVSGALVAFAFSG) threads the bilayer. Residues 1239–1244 (SKGKDI) are Extracellular-facing. The helical transmembrane segment at 1245–1265 (NTIKSLRVLRVLRPLKTIKRL) threads the bilayer. At 1266–1283 (PKLKAVFDCVVNSLKNVL) the chain is on the cytoplasmic side. Residues 1284-1303 (NILIVYMLFMFIFAVIAVQL) traverse the membrane as a helical segment. Residues 1304-1390 (FKGKFFYCTD…EQGPSPGYRM (87 aa)) lie on the Extracellular side of the membrane. A helical membrane pass occupies residues 1391-1416 (ELSIFYVVYFVVFPFFFVNIFVALII). The Cytoplasmic portion of the chain corresponds to 1417-1471 (ITFQEQGDKVMSECSLEKNERACIDFAISAKPLTRYMPQNRQSFQYKTWTFVVSP). One copy of the IV repeat lies at 1456-1711 (NRQSFQYKTW…LFVAVIMDNF (256 aa)). The chain crosses the membrane as a helical span at residues 1472–1490 (PFEYFIMAMIALNTVVLMM). At 1491–1498 (KFYDAPYE) the chain is on the extracellular side. Residues 1499 to 1523 (YELMLKCLNIVFTSMFSMECVLKII) traverse the membrane as a helical segment. At 1524-1533 (AFGVLNYFRD) the chain is on the cytoplasmic side. A helical transmembrane segment spans residues 1534 to 1555 (AWNVFDFVTVLGSITDILVTEI). Topologically, residues 1556–1563 (AETNNFIN) are extracellular. Residue asparagine 1563 is glycosylated (N-linked (GlcNAc...) asparagine). A helical transmembrane segment spans residues 1564–1582 (LSFLRLFRAARLIKLLRQG). Topologically, residues 1583 to 1601 (YTIRILLWTFVQSFKALPY) are cytoplasmic. Residues 1602–1621 (VCLLIAMLFFIYAIIGMQVF) form a helical membrane-spanning segment. The Extracellular portion of the chain corresponds to 1622 to 1683 (GNIALDDDTS…ANATECGSDF (62 aa)). Asparagine 1675 carries N-linked (GlcNAc...) asparagine glycosylation. A helical membrane pass occupies residues 1684–1707 (AYFYFVSFIFLCSFLMLNLFVAVI). The Cytoplasmic segment spans residues 1708-2339 (MDNFEYLTRD…YHHPDQDHWC (632 aa)). Residues 1724–1759 (HHLDEFIRVWAEYDPAACGRISYNDMFEMLKHMSPP) form the EF-hand domain. Aspartate 1737, arginine 1743, and aspartate 1748 together coordinate Ca(2+). Positions 1916–1931 (SSTSLSNGGAIQNQES) are enriched in polar residues. 2 disordered regions span residues 1916–1968 (SSTS…VGRS) and 1981–2206 (TRRG…YKTA). Positions 1946 to 1960 (DAPHEARPPLERGHS) are enriched in basic and acidic residues. Residues 2049–2063 (SHHHHHRCHRRRDRK) are compositionally biased toward basic residues. Position 2066 is a phosphoserine (serine 2066). Positions 2098–2116 (CRRERERRQERGRSQERRQ) are enriched in basic and acidic residues. The segment covering 2143 to 2153 (PSLSSHPTSPT) has biased composition (low complexity). The span at 2164-2180 (GSGSVNGSPLLSTSGAS) shows a compositional bias: polar residues. A phosphoserine mark is found at serine 2224, serine 2233, and serine 2256.

This sequence belongs to the calcium channel alpha-1 subunit (TC 1.A.1.11) family. CACNA1B subfamily. Multisubunit complex consisting of alpha-1, alpha-2, beta and delta subunits in a 1:1:1:1 ratio. The channel activity is directed by the pore-forming and voltage-sensitive alpha-1 subunit. In many cases, this subunit is sufficient to generate voltage-sensitive calcium channel activity. The auxiliary subunits beta and alpha-2/delta linked by a disulfide bridge regulate the channel activity. Interacts with RIMS1. Interacts with FMR1 (via C-terminus); this interaction induces a decrease in the number of presynaptic functional CACNA1B channels at the cell surface. Phosphorylated in vitro by CaM-kinase II, PKA, PKC and CGPK. As to expression, isoform Alpha-1b-1 and isoform Alpha-1b-2 are expressed in the central nervous system, but not in skeletal muscle or aorta. Expressed in the cerebral white matter, cortex, hippocampus, basal ganglia, and cerebellum.

It is found in the membrane. It catalyses the reaction Ca(2+)(in) = Ca(2+)(out). With respect to regulation, is specifically blocked by omega-conotoxin GVIA. Is specifically blocked by omega-conotoxin MVIIA (ziconotide). Is insensitive to dihydropyridines (DHP). Is specifically blocked by omega-conotoxin MVIIA (ziconotide). Is insensitive to dihydropyridines (DHP). Voltage-sensitive calcium channels (VSCC) mediate the entry of calcium ions into excitable cells and are also involved in a variety of calcium-dependent processes, including muscle contraction, hormone or neurotransmitter release, gene expression, cell motility, cell division and cell death. This alpha-1B subunit gives rise to N-type calcium currents. N-type calcium channels belong to the 'high-voltage activated' (HVA) group. They are involved in pain signaling. Calcium channels containing alpha-1B subunit may play a role in directed migration of immature neurons. Mediates Ca(2+) release probability at hippocampal neuronal soma and synaptic terminals. Functionally, voltage-sensitive calcium channels (VSCC) mediate the entry of calcium ions into excitable cells and are also involved in a variety of calcium-dependent processes, including muscle contraction, hormone or neurotransmitter release, gene expression, cell motility, cell division and cell death. This alpha-1B subunit gives rise to N-type calcium currents. The polypeptide is Voltage-dependent N-type calcium channel subunit alpha-1B (CACNA1B) (Homo sapiens (Human)).